We begin with the raw amino-acid sequence, 158 residues long: uncharacterized protein (158 aa).

Its function is as follows. The presence of the two linear plasmids, termed pGKL1 and pGKL2, in strains of Kluyveromyces lactis confers the killer phenotype to the host cell, by promoting the secretion of a toxin able to inhibit the growth of sensitive strains. This is an uncharacterized protein from Kluyveromyces lactis (strain ATCC 8585 / CBS 2359 / DSM 70799 / NBRC 1267 / NRRL Y-1140 / WM37) (Yeast).